A 93-amino-acid polypeptide reads, in one-letter code: Em protein (93 aa).

The interval 1–93 (MASGQQERSQ…IDESKFKTKS (93 aa)) is disordered. Composition is skewed to basic and acidic residues over residues 9 to 19 (SQLDRKAREGE), 38 to 52 (AEGRSRGGQTRREQM), and 73 to 93 (GGDRAAREGIDIDESKFKTKS).

Belongs to the small hydrophilic plant seed protein family.

It is thought to provide protection for the cytoplasm during the desiccation stage of embryo development. This is Em protein (EM) from Triticum aestivum (Wheat).